The chain runs to 490 residues: MALQFTLNQDAPASAAVDCIVVGVFADKTLSPAAQALDSASQGRLTALVARGDVASKTGSTTLLHDLPGVTAPRVLVVGLGEAGKFGVAPYLKAVGDATRALKTGAVGTALLTLTELTVKARDAAWNIRQAVTVSDHAAYRYTATLGKKKVDETGLTTLAIAGDDARALAVGVATAEGVEFARELGNLPPNYCTPAYLADTAAAFAGKFRGAEAEILDEAQMEALGMGSLLSVARGSANRPRLIVLKWNGGGDARPYVLVGKGITFDTGGVNLKTQGGIEEMKYDMCGGANVIGTFVATVKAELPINLVVVVPAVENAIDGNAYRPSDVITSMSGKTIEVGNTDAEGRLILCDALTYAERFNPEALVDVATLTGACMVALGHQTAGLMSKHDDLANELLAAGEHVFDRAWRLPLWDEYQGLLDSTFADVYNIGGRWGGAITAGCFLSRFTENQRWAHLDIAGVASDEGKRGMATGRPVGLLTQWLLDRAA.

Mn(2+) is bound by residues K262 and D267. K274 is an active-site residue. Residues D285, D344, and E346 each coordinate Mn(2+). R348 is a catalytic residue.

The protein belongs to the peptidase M17 family. Requires Mn(2+) as cofactor.

Its subcellular location is the cytoplasm. It catalyses the reaction Release of an N-terminal amino acid, Xaa-|-Yaa-, in which Xaa is preferably Leu, but may be other amino acids including Pro although not Arg or Lys, and Yaa may be Pro. Amino acid amides and methyl esters are also readily hydrolyzed, but rates on arylamides are exceedingly low.. The enzyme catalyses Release of an N-terminal amino acid, preferentially leucine, but not glutamic or aspartic acids.. Presumably involved in the processing and regular turnover of intracellular proteins. Catalyzes the removal of unsubstituted N-terminal amino acids from various peptides. This chain is Probable cytosol aminopeptidase, found in Xanthomonas axonopodis pv. citri (strain 306).